Consider the following 476-residue polypeptide: Transcription factor Sox-9-B (476 aa).

Disordered stretches follow at residues 1 to 67, 157 to 197, and 209 to 274; these read MNLL…TEDE, EAER…EQTH, and ADSP…FRDV. Residues 30–41 are compositionally biased toward low complexity; the sequence is SAGSPCPSGSGS. The segment covering 42 to 52 has biased composition (polar residues); the sequence is DTENTRPQENT. 2 stretches are compositionally biased toward basic and acidic residues: residues 56–67 and 157–174; these read GDQEMKKETEDE and EAER…DYKY. A Glycyl lysine isopeptide (Lys-Gly) (interchain with G-Cter in SUMO) cross-link involves residue lysine 61. A DNA-binding region (HMG box) is located at residues 105–173; sequence VKRPMNAFMV…QHKKDHPDYK (69 aa). Positions 211-220 are enriched in polar residues; that stretch reads SPHSTSSMSE. Short sequence motifs (9aaTAD) lie at residues 276–285 and 291–299; these read IGELSSEVIS and DVNEFDQYL. Positions 318 to 383 are disordered; that stretch reads YGISSTPSAT…SDQQQQHSPQ (66 aa). Low complexity predominate over residues 319–344; sequence GISSTPSATTGAGSAWMSKQQQQPQQ. Polar residues predominate over residues 345-360; it reads HSLSTINSEQSQSQQR. A Glycyl lysine isopeptide (Lys-Gly) (interchain with G-Cter in SUMO) cross-link involves residue lysine 364. A compositionally biased stretch (low complexity) spans 369–383; sequence SPSHYSDQQQQHSPQ. The 9aaTAD 3 signature appears at 427–435; the sequence is SGLYSNFTY. Residues 443–476 are disordered; the sequence is MYTPIADTTGVPSIPQTHSPQHWEQPVYTQLTRP. Polar residues predominate over residues 452-476; that stretch reads GVPSIPQTHSPQHWEQPVYTQLTRP.

Interacts with the sumoylation factors ube2i/ubc9 and sumo1. Sumoylated. Lys-364 is the major site of sumoylation, although sumoylation at Lys-61 also occurs. Sumoylation plays a key role in regulating formation of the neural crest and otic placode.

The protein localises to the nucleus. The protein resides in the cytoplasm. Transcription factor that plays a key role in chondrocytes differentiation and skeletal development. Specifically binds the 5'-ACAAAG-3' DNA motif present in enhancers and super-enhancers and promotes expression of genes important for chondrogenesis, including COL2A1. Plays a central role in successive steps of chondrocyte differentiation. Absolutely required for precartilaginous condensation, the first step in chondrogenesis during which skeletal progenitors differentiate into prechondrocytes. Together with SOX5 and SOX6, required for overt chondrogenesis when condensed prechondrocytes differentiate into early stage chondrocytes, the second step in chondrogenesis. Later, required to direct hypertrophic maturation and block osteoblast differentiation of growth plate chondrocytes: maintains chondrocyte columnar proliferation, delays prehypertrophy and then prevents osteoblastic differentiation of chondrocytes. Also required for chondrocyte hypertrophy, both indirectly, by keeping the lineage fate of chondrocytes, and directly, by remaining present in upper hypertrophic cells. Low lipid levels are the main nutritional determinant for chondrogenic commitment of skeletal progenitor cells: when lipids levels are low, FOXO transcription factors promote expression of SOX9, which induces chondrogenic commitment and suppresses fatty acid oxidation. In addition to cartilage development, also acts as a regulator of proliferation and differentiation in epithelial stem/progenitor cells. This chain is Transcription factor Sox-9-B (sox9-b), found in Xenopus laevis (African clawed frog).